We begin with the raw amino-acid sequence, 406 residues long: Argininosuccinate synthase (406 aa).

Residues 11 to 19 (AYSGGLDTS) and Ala-38 contribute to the ATP site. 2 residues coordinate L-citrulline: Tyr-91 and Ser-96. Gly-121 lines the ATP pocket. Residues Thr-123, Asn-127, and Asp-128 each contribute to the L-aspartate site. Residue Asn-127 coordinates L-citrulline. 5 residues coordinate L-citrulline: Arg-131, Ser-181, Ser-190, Glu-266, and Tyr-278.

The protein belongs to the argininosuccinate synthase family. Type 1 subfamily. Homotetramer.

The protein localises to the cytoplasm. The enzyme catalyses L-citrulline + L-aspartate + ATP = 2-(N(omega)-L-arginino)succinate + AMP + diphosphate + H(+). The protein operates within amino-acid biosynthesis; L-arginine biosynthesis; L-arginine from L-ornithine and carbamoyl phosphate: step 2/3. The chain is Argininosuccinate synthase from Campylobacter jejuni subsp. doylei (strain ATCC BAA-1458 / RM4099 / 269.97).